Here is a 419-residue protein sequence, read N- to C-terminus: Putative zinc metalloprotease SPy_1963/M5005_Spy1674 (419 aa).

Residue His18 coordinates Zn(2+). Glu19 is an active-site residue. Zn(2+) is bound at residue His22. A run of 4 helical transmembrane segments spans residues 169 to 191, 301 to 323, 343 to 365, and 392 to 411; these read LITN…ILLV, LAWS…FSLN, LESV…LIPI, and AYIT…AVTW. Residues 175–274 form the PDZ domain; the sequence is GPMNNFILGI…LKTVAVKPQK (100 aa).

Belongs to the peptidase M50B family. The cofactor is Zn(2+).

The protein resides in the cell membrane. In Streptococcus pyogenes serotype M1, this protein is Putative zinc metalloprotease SPy_1963/M5005_Spy1674.